Reading from the N-terminus, the 426-residue chain is Tol-Pal system protein TolB (426 aa).

The first 24 residues, 1–24 (MKLKSRFTSIIGVITLFFSQTVTA), serve as a signal peptide directing secretion.

This sequence belongs to the TolB family. The Tol-Pal system is composed of five core proteins: the inner membrane proteins TolA, TolQ and TolR, the periplasmic protein TolB and the outer membrane protein Pal. They form a network linking the inner and outer membranes and the peptidoglycan layer.

The protein localises to the periplasm. Functionally, part of the Tol-Pal system, which plays a role in outer membrane invagination during cell division and is important for maintaining outer membrane integrity. This Actinobacillus pleuropneumoniae serotype 5b (strain L20) protein is Tol-Pal system protein TolB.